The following is a 572-amino-acid chain: Urease subunit alpha (572 aa).

One can recognise a Urease domain in the interval 134 to 572; it reads AGIDSHIHLI…ASMNQRYFFG (439 aa). Ni(2+) contacts are provided by His-139, His-141, and Lys-222. An N6-carboxylysine modification is found at Lys-222. His-224 is a binding site for substrate. Ni(2+) is bound by residues His-251 and His-277. The active-site Proton donor is His-325. Position 365 (Asp-365) interacts with Ni(2+).

Belongs to the metallo-dependent hydrolases superfamily. Urease alpha subunit family. Heterotrimer of UreA (gamma), UreB (beta) and UreC (alpha) subunits. Three heterotrimers associate to form the active enzyme. The cofactor is Ni cation. In terms of processing, carboxylation allows a single lysine to coordinate two nickel ions.

It localises to the cytoplasm. The enzyme catalyses urea + 2 H2O + H(+) = hydrogencarbonate + 2 NH4(+). Its pathway is nitrogen metabolism; urea degradation; CO(2) and NH(3) from urea (urease route): step 1/1. This Yersinia pseudotuberculosis serotype O:1b (strain IP 31758) protein is Urease subunit alpha.